Here is a 508-residue protein sequence, read N- to C-terminus: Inosine-5'-monophosphate dehydrogenase (508 aa).

CBS domains lie at 111–170 (FITD…EITL) and 174–230 (MTTN…PDAS). NAD(+)-binding positions include Asp267 and 317 to 319 (GMG). K(+)-binding residues include Gly319 and Gly321. Ser322 provides a ligand contact to IMP. Cys324 provides a ligand contact to K(+). The active-site Thioimidate intermediate is Cys324. Residues 357 to 359 (DGG), 380 to 381 (GF), and 404 to 408 (YRGMA) contribute to the IMP site. Arg420 acts as the Proton acceptor in catalysis. Residue Gln432 coordinates IMP. Gly492 contacts K(+).

Belongs to the IMPDH/GMPR family. In terms of assembly, homotetramer. Requires K(+) as cofactor.

The enzyme catalyses IMP + NAD(+) + H2O = XMP + NADH + H(+). It participates in purine metabolism; XMP biosynthesis via de novo pathway; XMP from IMP: step 1/1. With respect to regulation, mycophenolic acid (MPA) is a non-competitive inhibitor that prevents formation of the closed enzyme conformation by binding to the same site as the amobile flap. In contrast, mizoribine monophosphate (MZP) is a competitive inhibitor that induces the closed conformation. MPA is a potent inhibitor of mammalian IMPDHs but a poor inhibitor of the bacterial enzymes. MZP is a more potent inhibitor of bacterial IMPDH. In terms of biological role, catalyzes the conversion of inosine 5'-phosphate (IMP) to xanthosine 5'-phosphate (XMP), the first committed and rate-limiting step in the de novo synthesis of guanine nucleotides, and therefore plays an important role in the regulation of cell growth. The protein is Inosine-5'-monophosphate dehydrogenase of Leptospira interrogans serogroup Icterohaemorrhagiae serovar Lai (strain 56601).